The following is a 300-amino-acid chain: Inosose dehydratase (300 aa).

Belongs to the IolE/MocC family. Requires glutathione as cofactor. It depends on Co(2+) as a cofactor. Mn(2+) is required as a cofactor.

It carries out the reaction scyllo-inosose = 3D-3,5/4-trihydroxycyclohexane-1,2-dione + H2O. In terms of biological role, catalyzes the dehydration of inosose (2-keto-myo-inositol, 2KMI or 2,4,6/3,5-pentahydroxycyclohexanone) to 3D-(3,5/4)-trihydroxycyclohexane-1,2-dione (D-2,3-diketo-4-deoxy-epi-inositol). This chain is Inosose dehydratase, found in Mesomycoplasma hyopneumoniae (strain 232) (Mycoplasma hyopneumoniae).